The primary structure comprises 359 residues: N-acetyl-gamma-glutamyl-phosphate reductase (359 aa).

The active site involves Cys-162.

It belongs to the NAGSA dehydrogenase family. Type 1 subfamily.

The protein resides in the cytoplasm. It carries out the reaction N-acetyl-L-glutamate 5-semialdehyde + phosphate + NADP(+) = N-acetyl-L-glutamyl 5-phosphate + NADPH + H(+). It participates in amino-acid biosynthesis; L-arginine biosynthesis; N(2)-acetyl-L-ornithine from L-glutamate: step 3/4. Functionally, catalyzes the NADPH-dependent reduction of N-acetyl-5-glutamyl phosphate to yield N-acetyl-L-glutamate 5-semialdehyde. The chain is N-acetyl-gamma-glutamyl-phosphate reductase from Prochlorococcus marinus (strain NATL2A).